The following is a 231-amino-acid chain: Ribonuclease 3 (231 aa).

Positions 7-135 constitute an RNase III domain; that stretch reads IQAIESKLNF…ILGAVYLDGG (129 aa). Position 48 (E48) interacts with Mg(2+). D52 is an active-site residue. Mg(2+) contacts are provided by N121 and E124. E124 is a catalytic residue. The DRBM domain maps to 160–229; the sequence is NPKNRLQQFT…AKQALSTHDN (70 aa).

It belongs to the ribonuclease III family. In terms of assembly, homodimer. It depends on Mg(2+) as a cofactor.

The protein resides in the cytoplasm. The catalysed reaction is Endonucleolytic cleavage to 5'-phosphomonoester.. In terms of biological role, digests double-stranded RNA. Involved in the processing of primary rRNA transcript to yield the immediate precursors to the large and small rRNAs (23S and 16S). Processes some mRNAs, and tRNAs when they are encoded in the rRNA operon. Processes pre-crRNA and tracrRNA of type II CRISPR loci if present in the organism. In Chlamydia trachomatis serovar A (strain ATCC VR-571B / DSM 19440 / HAR-13), this protein is Ribonuclease 3.